A 697-amino-acid polypeptide reads, in one-letter code: Potassium-transporting ATPase ATP-binding subunit (697 aa).

The next 4 helical transmembrane spans lie at 55–75, 79–99, 245–265, and 271–291; these read PIMF…FLPS, SIPG…VLFA, LTLI…YLGF, and VLVA…LSAI. Aspartate 324 acts as the 4-aspartylphosphate intermediate in catalysis. ATP contacts are provided by residues aspartate 361, glutamate 365, 393-400, and lysine 412; that span reads FKAETRMS. Residues aspartate 535 and aspartate 539 each contribute to the Mg(2+) site. 3 helical membrane passes run 605–625, 633–653, and 677–697; these read FAII…LNIM, AILS…PLAM, and GGVI…GLFI.

This sequence belongs to the cation transport ATPase (P-type) (TC 3.A.3) family. Type IA subfamily. In terms of assembly, the system is composed of three essential subunits: KdpA, KdpB and KdpC.

Its subcellular location is the cell membrane. The enzyme catalyses K(+)(out) + ATP + H2O = K(+)(in) + ADP + phosphate + H(+). In terms of biological role, part of the high-affinity ATP-driven potassium transport (or Kdp) system, which catalyzes the hydrolysis of ATP coupled with the electrogenic transport of potassium into the cytoplasm. This subunit is responsible for energy coupling to the transport system and for the release of the potassium ions to the cytoplasm. The protein is Potassium-transporting ATPase ATP-binding subunit of Bacillus cereus (strain ZK / E33L).